The chain runs to 215 residues: Phosphatidylserine decarboxylase proenzyme (215 aa).

The active-site Schiff-base intermediate with substrate; via pyruvic acid is Ser185. Ser185 is subject to Pyruvic acid (Ser); by autocatalysis.

This sequence belongs to the phosphatidylserine decarboxylase family. PSD-A subfamily. In terms of assembly, heterodimer of a large membrane-associated beta subunit and a small pyruvoyl-containing alpha subunit. It depends on pyruvate as a cofactor. Is synthesized initially as an inactive proenzyme. Formation of the active enzyme involves a self-maturation process in which the active site pyruvoyl group is generated from an internal serine residue via an autocatalytic post-translational modification. Two non-identical subunits are generated from the proenzyme in this reaction, and the pyruvate is formed at the N-terminus of the alpha chain, which is derived from the carboxyl end of the proenzyme. The post-translation cleavage follows an unusual pathway, termed non-hydrolytic serinolysis, in which the side chain hydroxyl group of the serine supplies its oxygen atom to form the C-terminus of the beta chain, while the remainder of the serine residue undergoes an oxidative deamination to produce ammonia and the pyruvoyl prosthetic group on the alpha chain.

The protein resides in the cell membrane. It catalyses the reaction a 1,2-diacyl-sn-glycero-3-phospho-L-serine + H(+) = a 1,2-diacyl-sn-glycero-3-phosphoethanolamine + CO2. It functions in the pathway phospholipid metabolism; phosphatidylethanolamine biosynthesis; phosphatidylethanolamine from CDP-diacylglycerol: step 2/2. Catalyzes the formation of phosphatidylethanolamine (PtdEtn) from phosphatidylserine (PtdSer). This is Phosphatidylserine decarboxylase proenzyme from Streptomyces avermitilis (strain ATCC 31267 / DSM 46492 / JCM 5070 / NBRC 14893 / NCIMB 12804 / NRRL 8165 / MA-4680).